A 372-amino-acid chain; its full sequence is L-selectin (372 aa).

The signal sequence occupies residues 1 to 28; sequence MIFPWKCQSTQRDLCNIFKLWGWTMLCC. Residues 29 to 38 constitute a propeptide that is removed on maturation; it reads DFLAHHGTDC. Residues 39 to 332 lie on the Extracellular side of the membrane; that stretch reads WTYHYSEKPM…FSMIKEGDYN (294 aa). A C-type lectin domain is found at 55-155; it reads RFCRENYTDL…ACHKLKAALC (101 aa). Cystine bridges form between Cys-57/Cys-155, Cys-128/Cys-147, Cys-128/Cys-160, Cys-160/Cys-171, Cys-165/Cys-180, Cys-182/Cys-191, Cys-197/Cys-241, Cys-227/Cys-254, Cys-259/Cys-303, and Cys-289/Cys-316. N-linked (GlcNAc...) asparagine glycosylation is found at Asn-60 and Asn-104. Ca(2+) is bound by residues Glu-118, Asn-120, Glu-126, Asn-143, and Asp-144. Positions 156–192 constitute an EGF-like domain; it reads YTASCQPWSCSGHGECVEIINNYTCNCDVGYYGPQCQ. Asn-177 is a glycosylation site (N-linked (GlcNAc...) asparagine). 2 consecutive Sushi domains span residues 195-256 and 257-318; these read IQCE…TCQV and IQCE…ICQK. Residues Asn-216, Asn-226, Asn-232, Asn-246, and Asn-271 are each glycosylated (N-linked (GlcNAc...) asparagine). Residues 333 to 355 traverse the membrane as a helical segment; the sequence is PLFIPVAVMVTAFSGLAFIIWLA. Topologically, residues 356–372 are cytoplasmic; the sequence is RRLKKGKKSKKSMDDPY.

It belongs to the selectin/LECAM family. As to quaternary structure, interaction with SELPLG/PSGL1 and PODXL2 is required for promoting recruitment and rolling of leukocytes. This interaction is dependent on the sialyl Lewis X glycan modification of SELPLG and PODXL2, and tyrosine sulfation modifications of SELPLG. Sulfation on 'Tyr-51' of SELPLG is important for L-selectin binding. N-glycosylated.

It localises to the cell membrane. Its function is as follows. Calcium-dependent lectin that mediates cell adhesion by binding to glycoproteins on neighboring cells. Mediates the adherence of lymphocytes to endothelial cells of high endothelial venules in peripheral lymph nodes. Promotes initial tethering and rolling of leukocytes in endothelia. The chain is L-selectin (SELL) from Pongo pygmaeus (Bornean orangutan).